A 284-amino-acid polypeptide reads, in one-letter code: Efem/EfeO family lipoprotein (284 aa).

An N-terminal signal peptide occupies residues 1 to 17; sequence MKKLTTLLLASTLLIAA. A lipid anchor (N-palmitoyl cysteine) is attached at cysteine 18. A lipid anchor (S-diacylglycerol cysteine) is attached at cysteine 18.

Belongs to the EfeM/EfeO family.

It is found in the cell membrane. This Staphylococcus aureus (strain USA300) protein is Efem/EfeO family lipoprotein.